Here is a 442-residue protein sequence, read N- to C-terminus: tRNA-2-methylthio-N(6)-dimethylallyladenosine synthase (442 aa).

Residues 3–118 (KKVFIKTFGC…LPELLNARAA (116 aa)) form the MTTase N-terminal domain. [4Fe-4S] cluster contacts are provided by cysteine 12, cysteine 49, cysteine 81, cysteine 155, cysteine 159, and cysteine 162. In terms of domain architecture, Radical SAM core spans 141 to 374 (RVEGSSAFVS…QAVINNNIKD (234 aa)). Positions 377–440 (DERVGTVQRL…TFTLRGEVVV (64 aa)) constitute a TRAM domain.

Belongs to the methylthiotransferase family. MiaB subfamily. In terms of assembly, monomer. [4Fe-4S] cluster is required as a cofactor.

It is found in the cytoplasm. It catalyses the reaction N(6)-dimethylallyladenosine(37) in tRNA + (sulfur carrier)-SH + AH2 + 2 S-adenosyl-L-methionine = 2-methylsulfanyl-N(6)-dimethylallyladenosine(37) in tRNA + (sulfur carrier)-H + 5'-deoxyadenosine + L-methionine + A + S-adenosyl-L-homocysteine + 2 H(+). In terms of biological role, catalyzes the methylthiolation of N6-(dimethylallyl)adenosine (i(6)A), leading to the formation of 2-methylthio-N6-(dimethylallyl)adenosine (ms(2)i(6)A) at position 37 in tRNAs that read codons beginning with uridine. The sequence is that of tRNA-2-methylthio-N(6)-dimethylallyladenosine synthase from Delftia acidovorans (strain DSM 14801 / SPH-1).